Reading from the N-terminus, the 251-residue chain is Tungstate/molybdate/chromate-binding protein ModA (251 aa).

An N-terminal signal peptide occupies residues methionine 1–alanine 23. Molybdate-binding residues include threonine 60 and isoleucine 168.

This sequence belongs to the bacterial solute-binding protein ModA family. As to quaternary structure, the complex is composed of two ATP-binding proteins (ModC), two transmembrane proteins (ModB) and a solute-binding protein (ModA).

The protein localises to the periplasm. Its function is as follows. Part of the ABC transporter complex ModABC involved in the transport of molybdenum into the cell. Binds tungstate and molybdate. Can also bind chromate, with lower affinity. Plays an essential role in recruitment of molybdate for nitrate reduction. In Pseudomonas aeruginosa (strain ATCC 15692 / DSM 22644 / CIP 104116 / JCM 14847 / LMG 12228 / 1C / PRS 101 / PAO1), this protein is Tungstate/molybdate/chromate-binding protein ModA.